The chain runs to 1390 residues: DNA-directed RNA polymerase subunit beta' (1390 aa).

Positions 73, 75, 88, and 91 each coordinate Zn(2+). Residues Asp464, Asp466, and Asp468 each contribute to the Mg(2+) site. Cys810, Cys884, Cys891, and Cys894 together coordinate Zn(2+). A disordered region spans residues 1365 to 1390; the sequence is EKKEQKIYGNGEEPAKEQKWIPQAGT.

The protein belongs to the RNA polymerase beta' chain family. As to quaternary structure, the RNAP catalytic core consists of 2 alpha, 1 beta, 1 beta' and 1 omega subunit. When a sigma factor is associated with the core the holoenzyme is formed, which can initiate transcription. It depends on Mg(2+) as a cofactor. Zn(2+) is required as a cofactor.

The catalysed reaction is RNA(n) + a ribonucleoside 5'-triphosphate = RNA(n+1) + diphosphate. DNA-dependent RNA polymerase catalyzes the transcription of DNA into RNA using the four ribonucleoside triphosphates as substrates. The polypeptide is DNA-directed RNA polymerase subunit beta' (Methylacidiphilum infernorum (isolate V4) (Methylokorus infernorum (strain V4))).